Consider the following 79-residue polypeptide: MORN repeat-containing protein 2 (79 aa).

MORN repeat units lie at residues 15 to 36 and 38 to 55; these read YEGQ…PNGA and YTGN…EYTD.

Its subcellular location is the cytoplasmic vesicle. It is found in the secretory vesicle. The protein resides in the acrosome. It localises to the nucleus. In terms of biological role, might have a role in spermatogenesis. The chain is MORN repeat-containing protein 2 from Homo sapiens (Human).